A 98-amino-acid chain; its full sequence is MTPIFTNIILAFATAFLGTLIFRSHLMSSLLCLEGMMLSLFILSTLIILNMHLTVSFMMPILLLVFAACEAAIGLALLVMVSNTYGLDYIKNLNLLQC.

The next 3 helical transmembrane spans lie at 2 to 22, 29 to 49, and 61 to 81; these read TPIF…TLIF, SLLC…LIIL, and ILLL…LVMV.

This sequence belongs to the complex I subunit 4L family. Core subunit of respiratory chain NADH dehydrogenase (Complex I) which is composed of 45 different subunits.

It localises to the mitochondrion inner membrane. The catalysed reaction is a ubiquinone + NADH + 5 H(+)(in) = a ubiquinol + NAD(+) + 4 H(+)(out). Its function is as follows. Core subunit of the mitochondrial membrane respiratory chain NADH dehydrogenase (Complex I) which catalyzes electron transfer from NADH through the respiratory chain, using ubiquinone as an electron acceptor. Part of the enzyme membrane arm which is embedded in the lipid bilayer and involved in proton translocation. This chain is NADH-ubiquinone oxidoreductase chain 4L (MT-ND4L), found in Avahi cleesei (Cleese's woolly lemur).